Consider the following 247-residue polypeptide: Small ribosomal subunit protein uS2 (247 aa).

Belongs to the universal ribosomal protein uS2 family.

The protein is Small ribosomal subunit protein uS2 of Cupriavidus pinatubonensis (strain JMP 134 / LMG 1197) (Cupriavidus necator (strain JMP 134)).